The primary structure comprises 762 residues: MAIQTSNLGYPRIGLQREWKKTLEAFWSNKINEEQFLTTMKEIRLQHVKVQQEKGIELIPIGDFTYYDHVLDTAYMLGFIPSRFSEFTSYLDVYFAMARGSKDHVASEMTKWFNTNYHYIVPEYEEGLQISLKDNRPLRLYEEAKQELGVDGKPVILGPYTFLKLAKGYTQEQFATILKQLVAPYVQLLSELHAAGAQIIQVDEPIFASLTKEEVQQAKEIYEAIRKEVPNATLLLQTYFDSVEENYENIITFPVSSIGLDFVHGKEGNLNAISKYGFPADKTLAVGCIDGRNIWRADLDEVLTLFTKLQTQVQTKDFIVQPSCSLLHTPIDKTEETHLSTELFDALAFANQKLEELVLIHSALTQGTESISNELETYRNVHHTIRSSAARNREDVKAARTALKEEDFSRPLPFEKRYKLQQVALKLPLLPTTTIGSFPQTTEVRQTRKEWRTGVISNKQYEQFIEKETEKWIRYQEEIGLDVLVHGEFERTDMVEYFGERLAGFSFTKNGWVQSYGSRCVKPPVIYGDVAFINGMTIKETVYAQSLTEKVVKGMLTGPVTILNWSFVRNDIPRKEVSYQIALALRHEIELLESSGIRVIQVDEPALREGMPLKEKDWDAYITWAVQSFLLATSSVANVTQIHTHMCYSNFEDIVDAIRALDADVISIETSRSHGEFIDTLKHTTYEKGIGLGVYDIHSPRVPSKDEMYKIVEQSLEVCDPKYFWINPDCGLKTRRTEEVIPALEHMVQAAKDARSLLKTNA.

5-methyltetrahydropteroyltri-L-glutamate-binding positions include 17 to 20 and lysine 111; that span reads REWK. L-homocysteine-binding positions include 435–437 and glutamate 488; that span reads IGS. Residues 435-437 and glutamate 488 each bind L-methionine; that span reads IGS. Residues 519-520 and tryptophan 565 each bind 5-methyltetrahydropteroyltri-L-glutamate; that span reads RC. Aspartate 603 contacts L-homocysteine. Aspartate 603 contacts L-methionine. Glutamate 609 serves as a coordination point for 5-methyltetrahydropteroyltri-L-glutamate. 3 residues coordinate Zn(2+): histidine 645, cysteine 647, and glutamate 669. The Proton donor role is filled by histidine 698. Cysteine 730 provides a ligand contact to Zn(2+).

The protein belongs to the vitamin-B12 independent methionine synthase family. Zn(2+) serves as cofactor.

It carries out the reaction 5-methyltetrahydropteroyltri-L-glutamate + L-homocysteine = tetrahydropteroyltri-L-glutamate + L-methionine. The protein operates within amino-acid biosynthesis; L-methionine biosynthesis via de novo pathway; L-methionine from L-homocysteine (MetE route): step 1/1. Catalyzes the transfer of a methyl group from 5-methyltetrahydrofolate to homocysteine resulting in methionine formation. This Bacillus cereus (strain ZK / E33L) protein is 5-methyltetrahydropteroyltriglutamate--homocysteine methyltransferase.